Reading from the N-terminus, the 462-residue chain is tRNA modification GTPase MnmE (462 aa).

The (6S)-5-formyl-5,6,7,8-tetrahydrofolate site is built by arginine 34, glutamate 92, and lysine 131. Residues 227–386 (GLQVVIAGKP…LIDAITAHAG (160 aa)) enclose the TrmE-type G domain. Position 237 (asparagine 237) interacts with K(+). GTP is bound by residues 237 to 242 (NAGKSS), 256 to 262 (TDIAGTT), and 281 to 284 (DTAG). Serine 241 lines the Mg(2+) pocket. Residues threonine 256, isoleucine 258, and threonine 261 each contribute to the K(+) site. Threonine 262 is a Mg(2+) binding site. A (6S)-5-formyl-5,6,7,8-tetrahydrofolate-binding site is contributed by lysine 462.

Belongs to the TRAFAC class TrmE-Era-EngA-EngB-Septin-like GTPase superfamily. TrmE GTPase family. As to quaternary structure, homodimer. Heterotetramer of two MnmE and two MnmG subunits. The cofactor is K(+).

It is found in the cytoplasm. In terms of biological role, exhibits a very high intrinsic GTPase hydrolysis rate. Involved in the addition of a carboxymethylaminomethyl (cmnm) group at the wobble position (U34) of certain tRNAs, forming tRNA-cmnm(5)s(2)U34. This is tRNA modification GTPase MnmE from Acinetobacter baylyi (strain ATCC 33305 / BD413 / ADP1).